The primary structure comprises 570 residues: Sulfite reductase [NADPH] hemoprotein beta-component (570 aa).

Cys434, Cys440, Cys479, and Cys483 together coordinate [4Fe-4S] cluster. A siroheme-binding site is contributed by Cys483.

This sequence belongs to the nitrite and sulfite reductase 4Fe-4S domain family. Alpha(8)-beta(8). The alpha component is a flavoprotein, the beta component is a hemoprotein. Siroheme is required as a cofactor. [4Fe-4S] cluster serves as cofactor.

It catalyses the reaction hydrogen sulfide + 3 NADP(+) + 3 H2O = sulfite + 3 NADPH + 4 H(+). It functions in the pathway sulfur metabolism; hydrogen sulfide biosynthesis; hydrogen sulfide from sulfite (NADPH route): step 1/1. Its function is as follows. Component of the sulfite reductase complex that catalyzes the 6-electron reduction of sulfite to sulfide. This is one of several activities required for the biosynthesis of L-cysteine from sulfate. The chain is Sulfite reductase [NADPH] hemoprotein beta-component from Escherichia coli O9:H4 (strain HS).